Reading from the N-terminus, the 311-residue chain is Porphobilinogen deaminase (311 aa).

Cys-243 carries the S-(dipyrrolylmethanemethyl)cysteine modification.

Belongs to the HMBS family. Monomer. The cofactor is dipyrromethane.

It carries out the reaction 4 porphobilinogen + H2O = hydroxymethylbilane + 4 NH4(+). It participates in porphyrin-containing compound metabolism; protoporphyrin-IX biosynthesis; coproporphyrinogen-III from 5-aminolevulinate: step 2/4. Tetrapolymerization of the monopyrrole PBG into the hydroxymethylbilane pre-uroporphyrinogen in several discrete steps. The chain is Porphobilinogen deaminase from Blochmanniella floridana.